Reading from the N-terminus, the 115-residue chain is Large ribosomal subunit protein P2 (115 aa).

Methionine 1 bears the N-acetylmethionine mark. Residues serine 17 and serine 19 each carry the phosphoserine modification. Lysine 21 is subject to N6-acetyllysine; alternate. N6-succinyllysine; alternate is present on lysine 21. Low complexity predominate over residues 78–90 (GSAAPAAGSAPAA). The segment at 78 to 115 (GSAAPAAGSAPAAAEEKKDEKKEESEESDDDMGFGLFD) is disordered. Residues serine 79 and serine 86 each carry the phosphoserine modification. A compositionally biased stretch (basic and acidic residues) spans 91-101 (AEEKKDEKKEE). Residues serine 102 and serine 105 each carry the phosphoserine modification.

This sequence belongs to the eukaryotic ribosomal protein P1/P2 family. In terms of assembly, heterodimer with P1 at the lateral ribosomal stalk of the large ribosomal subunit.

Its function is as follows. Plays an important role in the elongation step of protein synthesis. This chain is Large ribosomal subunit protein P2 (RPLP2), found in Homo sapiens (Human).